The primary structure comprises 322 residues: Homoserine kinase (322 aa).

107 to 117 (PLSSGMGGSAA) is an ATP binding site.

Belongs to the GHMP kinase family. Homoserine kinase subfamily.

It is found in the cytoplasm. It catalyses the reaction L-homoserine + ATP = O-phospho-L-homoserine + ADP + H(+). It functions in the pathway amino-acid biosynthesis; L-threonine biosynthesis; L-threonine from L-aspartate: step 4/5. In terms of biological role, catalyzes the ATP-dependent phosphorylation of L-homoserine to L-homoserine phosphate. This is Homoserine kinase from Xylella fastidiosa (strain 9a5c).